The following is a 78-amino-acid chain: UPF0270 protein YPO0179/y3960/YP_0178 (78 aa).

This sequence belongs to the UPF0270 family.

The sequence is that of UPF0270 protein YPO0179/y3960/YP_0178 from Yersinia pestis.